The primary structure comprises 239 residues: Nicotinamide riboside transporter PnuC (239 aa).

Topologically, residues 1-21 (MDFFSVQNILVHIPIGAGGYD) are cytoplasmic. The helical transmembrane segment at 22–42 (LSWIEAVGTIAGLLCIGLASL) threads the bilayer. At 43–48 (EKISNY) the chain is on the periplasmic side. A helical membrane pass occupies residues 49–68 (FFGLINVTLFGIIFFQIQLY). Over 69–71 (ASL) the chain is Cytoplasmic. Residues 72-89 (LLQVFFFAANIYGWYAWS) traverse the membrane as a helical segment. The Periplasmic segment spans residues 90–109 (RQTSQNEAELKIRWLPLPKA). A helical transmembrane segment spans residues 110-127 (LSWLAVCVVSIGLMTVFI). The Cytoplasmic segment spans residues 128 to 157 (NPVFAFLTRVAVMIMQALGLQVVMPELQPD). A helical transmembrane segment spans residues 158-177 (AFPFWDSCMMVLSIVAMILM). Residues 178 to 183 (TRKYVE) lie on the Periplasmic side of the membrane. The chain crosses the membrane as a helical span at residues 184-206 (NWLLWVIINVISVVIFALQGVYA). 2 residues coordinate beta-nicotinamide D-riboside: Trp188 and Asn192. The Cytoplasmic segment spans residues 207-239 (MSLEYIILTFIALNGSRMWINSARERGSRALSH).

It belongs to the nicotinamide ribonucleoside (NR) uptake permease (TC 4.B.1) family.

Its subcellular location is the cell inner membrane. Its function is as follows. Required for nicotinamide riboside transport across the inner membrane. The protein is Nicotinamide riboside transporter PnuC (pnuC) of Escherichia coli (strain K12).